We begin with the raw amino-acid sequence, 670 residues long: MYIVNLILPLIGSIITGIFGHKLGNRISIKIAVGCMMLTAISSLYIGYEILLCNSVVHFKLGTWMQVGSLNVEYGLLYDSLTSIMIIVITCISSMVHLYSMDYMKEDPHKTRFFSYLSLFTFFMMLLVTADNFVQLFFGWEGVGIMSYLLINFWYTRLQANKSALKAVILNRFGDFGLFFGILLVFLVFKSVDFSVIFTIAPFITEYTINLLGYEVNAITLIGSFIVIGVVGKSAQLGLHMWLPDAMEGPTPVSALLHAATMVTAGVFLVLRTSPLLSYSITILNILTIIGALTTLFATTIGIVQNDIKRVIAYSTCSQLGYMIFACGLLNYNASIYHLTTHAFFKALLFLSAGSVIHGLNDEQDMRKMGGLVNLMPLTYQCMLIGTLALTGFPFLSGYYSKDIILETSYATYYWEGTFAAIIGYVAAFGTTFYSFRLLILTFFNKPRMQYKTIAGVHEASTNMVIPLVILALCSIFIGYVTKDFFVGLGTPVWNNSFFAYPYNNLILESEVLQRELKLLPLFAFIYGVITPVLFYFNIKEDRMINVKQNLMVKESYFFFVKKWYFDFLSRVLIVVPFFHLSYDVMNKNLDKGLWEKIGVTGVATTLVTAFTALKLKNEITLSTYISYIVQTIILIIVVGIFSFMTGFIYMELCIIIGILYICLPSIKID.

19 helical membrane passes run 1–21, 31–51, 81–101, 111–131, 133–153, 178–198, 211–231, 251–271, 283–303, 311–331, 339–359, 375–395, 421–441, 462–482, 519–539, 566–586, 594–614, 629–649, and 650–670; these read MYIV…IFGH, IAVG…YEIL, LTSI…LYSM, TRFF…VTAD, FVQL…LINF, LFFG…SVIF, LLGY…IGVV, TPVS…FLVL, ILNI…TIGI, VIAY…GLLN, LTTH…VIHG, LMPL…GFPF, AIIG…LLIL, TNMV…GYVT, LLPL…YFNI, FDFL…YDVM, LWEK…FTAL, IVQT…TGFI, and YMEL…IKID.

The protein belongs to the complex I subunit 5 family.

It localises to the mitochondrion inner membrane. The catalysed reaction is a ubiquinone + NADH + 5 H(+)(in) = a ubiquinol + NAD(+) + 4 H(+)(out). Functionally, core subunit of the mitochondrial membrane respiratory chain NADH dehydrogenase (Complex I) that is believed to belong to the minimal assembly required for catalysis. Complex I functions in the transfer of electrons from NADH to the respiratory chain. The immediate electron acceptor for the enzyme is believed to be ubiquinone. The chain is NADH-ubiquinone oxidoreductase chain 5 (nad5) from Dictyostelium discoideum (Social amoeba).